The chain runs to 686 residues: Band 4.1-like protein 4A (686 aa).

An FERM domain is found at 11–299; that stretch reads FYCEVLLLDE…EHHTFFRMPD (289 aa). Residue Ser-304 is modified to Phosphoserine. 2 stretches are compositionally biased toward polar residues: residues 332 to 346 and 357 to 382; these read DLSI…NVVR and AQTQ…NEGT. The interval 332–669 is disordered; it reads DLSIQLPRPN…LSTINPAGKP (338 aa). Phosphoserine occurs at positions 389, 393, and 402. 2 stretches are compositionally biased toward polar residues: residues 418-428 and 442-455; these read GPQSGLYNSSS and RNLS…SSQL. Over residues 479–489 the composition is skewed to low complexity; that stretch reads RCNTSSGSESE. 2 stretches are compositionally biased toward basic and acidic residues: residues 518-527 and 547-561; these read VLRRQKEKNQ and QAKE…KELV. The span at 588–601 shows a compositional bias: basic residues; sequence IRHSHSPRSYRQYR. A compositionally biased stretch (basic and acidic residues) spans 648–658; sequence GSKDSLIEEKS.

In terms of tissue distribution, brain, heart, lung, liver and spleen. Not detected in thymus and kidney.

It is found in the cytoplasm. The protein resides in the cytoskeleton. The sequence is that of Band 4.1-like protein 4A from Mus musculus (Mouse).